The chain runs to 374 residues: F-box/LRR-repeat protein 8 (374 aa).

The F-box domain occupies 2 to 48 (AEPGEQLPEEVLALIFRHLPLPDRAAAARVCRAWAAAATCSAVWHDT).

In terms of assembly, directly interacts with SKP1 and CUL1.

Its function is as follows. Substrate-recognition component of the SCF (SKP1-CUL1-F-box protein)-type E3 ubiquitin ligase complex. The chain is F-box/LRR-repeat protein 8 (FBXL8) from Bos taurus (Bovine).